We begin with the raw amino-acid sequence, 93 residues long: MMSLQMLLLAALLLGTSLQHASAARATNVGRECCLDYFKGAIPIRKLVTWFRTSVECPKDAIVFETVQGRLICTDPKDKHVKKAIRHLKNQRL.

An N-terminal signal peptide occupies residues 1-23 (MMSLQMLLLAALLLGTSLQHASA). 2 disulfide bridges follow: Cys-33–Cys-57 and Cys-34–Cys-73.

It belongs to the intercrine beta (chemokine CC) family.

It is found in the secreted. In terms of biological role, chemokine, which displays chemotactic activity for T lymphocytes, preferentially Th2 cells, but not monocytes or granulocytes. Therefore plays an important role in a wide range of inflammatory and immunological processes. Acts by binding to CCR4 at T-cell surface. Mediates GM-CSF/CSF2-driven pain and inflammation. In the brain, required to maintain the typical, highly branched morphology of hippocampal microglia under homeostatic conditions. May be important for the appropriate adaptation of microglial morphology and synaptic plasticity to acute lipopolysaccharide (LPS)-induced neuroinflammation. Plays a role in wound healing, mainly by inducing fibroblast migration into the wound. This Rattus norvegicus (Rat) protein is C-C motif chemokine 17 (Ccl17).